We begin with the raw amino-acid sequence, 577 residues long: Arginine--tRNA ligase (577 aa).

The 'HIGH' region motif lies at 123–133 (PNVAKEMHVGH).

This sequence belongs to the class-I aminoacyl-tRNA synthetase family. In terms of assembly, monomer.

The protein resides in the cytoplasm. The catalysed reaction is tRNA(Arg) + L-arginine + ATP = L-arginyl-tRNA(Arg) + AMP + diphosphate. In Cronobacter sakazakii (strain ATCC BAA-894) (Enterobacter sakazakii), this protein is Arginine--tRNA ligase.